The following is a 329-amino-acid chain: Probable cell division protein WhiA (329 aa).

Positions Ser275–Gln308 form a DNA-binding region, H-T-H motif.

The protein belongs to the WhiA family.

Its function is as follows. Involved in cell division and chromosome segregation. This Streptomyces avermitilis (strain ATCC 31267 / DSM 46492 / JCM 5070 / NBRC 14893 / NCIMB 12804 / NRRL 8165 / MA-4680) protein is Probable cell division protein WhiA.